The sequence spans 229 residues: Protein-L-isoaspartate O-methyltransferase (229 aa).

Ser-78 is an active-site residue.

The protein belongs to the methyltransferase superfamily. L-isoaspartyl/D-aspartyl protein methyltransferase family.

Its subcellular location is the cytoplasm. The enzyme catalyses [protein]-L-isoaspartate + S-adenosyl-L-methionine = [protein]-L-isoaspartate alpha-methyl ester + S-adenosyl-L-homocysteine. In terms of biological role, catalyzes the methyl esterification of L-isoaspartyl residues in peptides and proteins that result from spontaneous decomposition of normal L-aspartyl and L-asparaginyl residues. It plays a role in the repair and/or degradation of damaged proteins. The protein is Protein-L-isoaspartate O-methyltransferase of Chromohalobacter salexigens (strain ATCC BAA-138 / DSM 3043 / CIP 106854 / NCIMB 13768 / 1H11).